The following is a 365-amino-acid chain: UDP-N-acetylglucosamine--N-acetylmuramyl-(pentapeptide) pyrophosphoryl-undecaprenol N-acetylglucosamine transferase (365 aa).

UDP-N-acetyl-alpha-D-glucosamine is bound by residues 12–14 (TGG), asparagine 128, arginine 169, serine 195, and glutamine 296.

It belongs to the glycosyltransferase 28 family. MurG subfamily.

Its subcellular location is the cell inner membrane. It catalyses the reaction di-trans,octa-cis-undecaprenyl diphospho-N-acetyl-alpha-D-muramoyl-L-alanyl-D-glutamyl-meso-2,6-diaminopimeloyl-D-alanyl-D-alanine + UDP-N-acetyl-alpha-D-glucosamine = di-trans,octa-cis-undecaprenyl diphospho-[N-acetyl-alpha-D-glucosaminyl-(1-&gt;4)]-N-acetyl-alpha-D-muramoyl-L-alanyl-D-glutamyl-meso-2,6-diaminopimeloyl-D-alanyl-D-alanine + UDP + H(+). It participates in cell wall biogenesis; peptidoglycan biosynthesis. Cell wall formation. Catalyzes the transfer of a GlcNAc subunit on undecaprenyl-pyrophosphoryl-MurNAc-pentapeptide (lipid intermediate I) to form undecaprenyl-pyrophosphoryl-MurNAc-(pentapeptide)GlcNAc (lipid intermediate II). In Gluconobacter oxydans (strain 621H) (Gluconobacter suboxydans), this protein is UDP-N-acetylglucosamine--N-acetylmuramyl-(pentapeptide) pyrophosphoryl-undecaprenol N-acetylglucosamine transferase.